The following is a 430-amino-acid chain: Lipoyl synthase, mitochondrial (430 aa).

The transit peptide at 1 to 29 (MASPVPIQRLQAPLRRSLARAAALSTRSY) directs the protein to the mitochondrion. The segment covering 28-58 (SYATIPSGPSSQPTSQESSSAASASAPATKP) has biased composition (low complexity). Positions 28-62 (SYATIPSGPSSQPTSQESSSAASASAPATKPRPTY) are disordered. [4Fe-4S] cluster-binding residues include Cys-142, Cys-147, Cys-153, Cys-173, Cys-177, Cys-180, and Ser-390. One can recognise a Radical SAM core domain in the interval 156-379 (GSNKAAATAT…RQRALDMGFL (224 aa)).

Belongs to the radical SAM superfamily. Lipoyl synthase family. [4Fe-4S] cluster serves as cofactor.

It localises to the mitochondrion. It carries out the reaction [[Fe-S] cluster scaffold protein carrying a second [4Fe-4S](2+) cluster] + N(6)-octanoyl-L-lysyl-[protein] + 2 oxidized [2Fe-2S]-[ferredoxin] + 2 S-adenosyl-L-methionine + 4 H(+) = [[Fe-S] cluster scaffold protein] + N(6)-[(R)-dihydrolipoyl]-L-lysyl-[protein] + 4 Fe(3+) + 2 hydrogen sulfide + 2 5'-deoxyadenosine + 2 L-methionine + 2 reduced [2Fe-2S]-[ferredoxin]. It functions in the pathway protein modification; protein lipoylation via endogenous pathway; protein N(6)-(lipoyl)lysine from octanoyl-[acyl-carrier-protein]: step 2/2. In terms of biological role, catalyzes the radical-mediated insertion of two sulfur atoms into the C-6 and C-8 positions of the octanoyl moiety bound to the lipoyl domains of lipoate-dependent enzymes, thereby converting the octanoylated domains into lipoylated derivatives. This chain is Lipoyl synthase, mitochondrial, found in Neurospora crassa (strain ATCC 24698 / 74-OR23-1A / CBS 708.71 / DSM 1257 / FGSC 987).